A 102-amino-acid polypeptide reads, in one-letter code: Small ribosomal subunit protein uS10 (102 aa).

It belongs to the universal ribosomal protein uS10 family. In terms of assembly, part of the 30S ribosomal subunit.

Its function is as follows. Involved in the binding of tRNA to the ribosomes. The polypeptide is Small ribosomal subunit protein uS10 (Clostridium perfringens (strain ATCC 13124 / DSM 756 / JCM 1290 / NCIMB 6125 / NCTC 8237 / Type A)).